A 128-amino-acid chain; its full sequence is Calcitonin gene-related peptide 1 (128 aa).

Residues M1–A25 form the signal peptide. A propeptide spanning residues A26 to Q80 is cleaved from the precursor. Residues C84 and C89 are joined by a disulfide bond. F119 bears the Phenylalanine amide mark. Residues D125–A128 constitute a propeptide that is removed on maturation.

Belongs to the calcitonin family. In terms of tissue distribution, expressed in spinal cord.

Its subcellular location is the secreted. Its function is as follows. CGRP1/CALCA is a peptide hormone that induces vasodilation mediated by the CALCRL-RAMP1 receptor complex. Dilates a variety of vessels including the coronary, cerebral and systemic vasculature. Its abundance in the CNS also points toward a neurotransmitter or neuromodulator role. It also elevates platelet cAMP. CGRP1 can also bind and activate CALCR-RAMP1 (AMYR1) receptor complex. The chain is Calcitonin gene-related peptide 1 from Homo sapiens (Human).